The primary structure comprises 516 residues: Alpha-(1-&gt;6)-mannopyranosyltransferase A (516 aa).

At Thr2 the chain carries N-acetylthreonine. Transmembrane regions (helical) follow at residues 38–58 (ARLG…AGSV), 78–98 (GLVL…LAWL), 112–132 (FTMR…VPVF), 174–194 (ITTA…TVIV), 198–218 (VVAG…LLVW), 232–252 (PTAL…MGGV), 278–298 (IILI…LPFL), 326–346 (LLIF…GLGW), 350–370 (LAGS…ANVI), 385–405 (LLRI…PLLW), 414–434 (AALT…PAAL), 454–474 (AIAA…PDGS), and 477–497 (MYSW…WYVL).

This sequence belongs to the MptA/B family.

The protein localises to the membrane. In terms of biological role, involved in the latter stages of the biosynthesis of the alpha-(1-&gt;6) mannan core of lipomannan (LM). Catalyzes the addition of alpha-(1-&gt;6)-mannose residue. This chain is Alpha-(1-&gt;6)-mannopyranosyltransferase A (mptA), found in Mycobacterium tuberculosis (strain ATCC 25618 / H37Rv).